Reading from the N-terminus, the 392-residue chain is Formate-dependent phosphoribosylglycinamide formyltransferase (392 aa).

Residues 22 to 23 (EL) and E82 each bind N(1)-(5-phospho-beta-D-ribosyl)glycinamide. Residues R114, K155, 160–165 (SSGKGQ), 195–198 (EGLV), and E203 each bind ATP. The region spanning 119-308 (RLAAETLGVP…EFALHVRAFL (190 aa)) is the ATP-grasp domain. Mg(2+) contacts are provided by E267 and E279. Residues D286, K355, and 362 to 363 (RR) each bind N(1)-(5-phospho-beta-D-ribosyl)glycinamide.

It belongs to the PurK/PurT family. In terms of assembly, homodimer.

The enzyme catalyses N(1)-(5-phospho-beta-D-ribosyl)glycinamide + formate + ATP = N(2)-formyl-N(1)-(5-phospho-beta-D-ribosyl)glycinamide + ADP + phosphate + H(+). It participates in purine metabolism; IMP biosynthesis via de novo pathway; N(2)-formyl-N(1)-(5-phospho-D-ribosyl)glycinamide from N(1)-(5-phospho-D-ribosyl)glycinamide (formate route): step 1/1. Involved in the de novo purine biosynthesis. Catalyzes the transfer of formate to 5-phospho-ribosyl-glycinamide (GAR), producing 5-phospho-ribosyl-N-formylglycinamide (FGAR). Formate is provided by PurU via hydrolysis of 10-formyl-tetrahydrofolate. The sequence is that of Formate-dependent phosphoribosylglycinamide formyltransferase from Pectobacterium carotovorum subsp. carotovorum (strain PC1).